A 58-amino-acid chain; its full sequence is Arabinogalactan protein 21 (58 aa).

An N-terminal signal peptide occupies residues 1–24 (MEAMKMKMMVFIMVVAVAFSAATA). 3 positions are modified to 4-hydroxyproline: proline 30, proline 32, and proline 34. O-linked (Ara...) hydroxyproline glycans are attached at residues proline 30, proline 32, and proline 34. Serine 36 is lipidated: GPI-anchor amidated serine. Residues 37 to 58 (DAAMFVPALFASVVALASGFIF) constitute a propeptide, removed in mature form.

The protein belongs to the AG-peptide AGP family. Contains 4-hydroxyproline; hydroxylated on Pro-30, Pro-32 and Pro-34. Post-translationally, O-glycosylated on hydroxyprolines; noncontiguous hydroxylproline residues are glycosylated with arabinogalactan.

It localises to the cell membrane. Functionally, proteoglycan that seems to be implicated in diverse developmental roles such as differentiation, cell-cell recognition, embryogenesis and programmed cell death. This is Arabinogalactan protein 21 from Arabidopsis thaliana (Mouse-ear cress).